A 101-amino-acid chain; its full sequence is Gamma-secretase subunit PEN-2 (101 aa).

Residues 1–17 are Cytoplasmic-facing; sequence MNLERVSNEEKLNLCRK. Residues 18-36 constitute an intramembrane region (helical); the sequence is YYLGGFAFLPFLWLVNIFW. Residues 37-57 are Cytoplasmic-facing; sequence FFREAFLVPAYTEQSQIKGYV. The helical transmembrane segment at 58-78 threads the bilayer; that stretch reads WRSAVGFLFWVIVLTSWITIF. The Lumenal segment spans residues 79–101; the sequence is QIYRPRWGALGDYLSFTIPLGTP.

It belongs to the PEN-2 family. The functional gamma-secretase complex is composed of at least four polypeptides: a presenilin homodimer (PSEN1 or PSEN2), nicastrin (NCSTN), APH1 (APH1A or APH1B) and PSENEN. Widely expressed. Expressed in leukocytes, lung, placenta, small intestine, liver, kidney, spleen thymus, skeletal muscle, heart and brain.

Its subcellular location is the endoplasmic reticulum membrane. The protein localises to the golgi apparatus. The protein resides in the golgi stack membrane. It localises to the cell membrane. It is found in the membrane. Functionally, essential subunit of the gamma-secretase complex, an endoprotease complex that catalyzes the intramembrane cleavage of integral membrane proteins such as Notch receptors and APP (amyloid-beta precursor protein). The gamma-secretase complex plays a role in Notch and Wnt signaling cascades and regulation of downstream processes via its role in processing key regulatory proteins, and by regulating cytosolic CTNNB1 levels. PSENEN modulates both endoproteolysis of presenilin and gamma-secretase activity. In Homo sapiens (Human), this protein is Gamma-secretase subunit PEN-2 (PSENEN).